We begin with the raw amino-acid sequence, 251 residues long: Small ribosomal subunit protein uS2 (251 aa).

The protein belongs to the universal ribosomal protein uS2 family.

This chain is Small ribosomal subunit protein uS2, found in Novosphingobium aromaticivorans (strain ATCC 700278 / DSM 12444 / CCUG 56034 / CIP 105152 / NBRC 16084 / F199).